Consider the following 401-residue polypeptide: 4-hydroxy-3-methylbut-2-en-1-yl diphosphate synthase (ferredoxin) (401 aa).

Cys306, Cys309, Cys340, and Glu347 together coordinate [4Fe-4S] cluster.

Belongs to the IspG family. [4Fe-4S] cluster serves as cofactor.

The enzyme catalyses (2E)-4-hydroxy-3-methylbut-2-enyl diphosphate + 2 oxidized [2Fe-2S]-[ferredoxin] + H2O = 2-C-methyl-D-erythritol 2,4-cyclic diphosphate + 2 reduced [2Fe-2S]-[ferredoxin] + H(+). It functions in the pathway isoprenoid biosynthesis; isopentenyl diphosphate biosynthesis via DXP pathway; isopentenyl diphosphate from 1-deoxy-D-xylulose 5-phosphate: step 5/6. In terms of biological role, converts 2C-methyl-D-erythritol 2,4-cyclodiphosphate (ME-2,4cPP) into 1-hydroxy-2-methyl-2-(E)-butenyl 4-diphosphate. The polypeptide is 4-hydroxy-3-methylbut-2-en-1-yl diphosphate synthase (ferredoxin) (Synechococcus sp. (strain CC9902)).